The sequence spans 464 residues: ATP synthase subunit beta 2 (464 aa).

ATP is bound at residue 153-160; that stretch reads GGAGVGKT.

Belongs to the ATPase alpha/beta chains family. F-type ATPases have 2 components, CF(1) - the catalytic core - and CF(0) - the membrane proton channel. CF(1) has five subunits: alpha(3), beta(3), gamma(1), delta(1), epsilon(1). CF(0) has three main subunits: a(1), b(2) and c(9-12). The alpha and beta chains form an alternating ring which encloses part of the gamma chain. CF(1) is attached to CF(0) by a central stalk formed by the gamma and epsilon chains, while a peripheral stalk is formed by the delta and b chains.

It localises to the cell inner membrane. It catalyses the reaction ATP + H2O + 4 H(+)(in) = ADP + phosphate + 5 H(+)(out). In terms of biological role, produces ATP from ADP in the presence of a proton gradient across the membrane. The catalytic sites are hosted primarily by the beta subunits. The chain is ATP synthase subunit beta 2 from Paraburkholderia xenovorans (strain LB400).